Consider the following 110-residue polypeptide: uncharacterized protein (110 aa).

This sequence belongs to the HesB/IscA family.

This is an uncharacterized protein from Rickettsia prowazekii (strain Madrid E).